A 102-amino-acid polypeptide reads, in one-letter code: Large ribosomal subunit protein bL21 (102 aa).

It belongs to the bacterial ribosomal protein bL21 family. Part of the 50S ribosomal subunit. Contacts protein L20.

This protein binds to 23S rRNA in the presence of protein L20. The polypeptide is Large ribosomal subunit protein bL21 (Latilactobacillus sakei subsp. sakei (strain 23K) (Lactobacillus sakei subsp. sakei)).